Consider the following 304-residue polypeptide: Glycine--tRNA ligase alpha subunit (304 aa).

The protein belongs to the class-II aminoacyl-tRNA synthetase family. As to quaternary structure, tetramer of two alpha and two beta subunits.

Its subcellular location is the cytoplasm. The enzyme catalyses tRNA(Gly) + glycine + ATP = glycyl-tRNA(Gly) + AMP + diphosphate. This Yersinia enterocolitica serotype O:8 / biotype 1B (strain NCTC 13174 / 8081) protein is Glycine--tRNA ligase alpha subunit.